The primary structure comprises 315 residues: Long form salivary protein D7L2 (315 aa).

The first 18 residues, 1–18, serve as a signal peptide directing secretion; it reads MIVAPVVLSIFLQLFVQA. 4 disulfides stabilise this stretch: C37/C73, C69/C128, C178/C211, and C252/C263.

Belongs to the PBP/GOBP family. Interacts with host coagulation factor XII/F12 (inactive and activated). Interacts with host coagulation factor XI/F11 (inactive).

It is found in the secreted. In terms of biological role, modulates blood feeding of female mosquitoes on vertebrate species by binding and sequestering different mediators involved in the host response. Binds leukotriene B4 and leukotriene D4. Exhibits anticoagulant activity targeting the intrinsic coagulation pathway; binds coagulation factors XII and XI, preventing generation of activated FXIIa and FXIa. The protein is Long form salivary protein D7L2 of Anopheles gambiae (African malaria mosquito).